Here is a 304-residue protein sequence, read N- to C-terminus: Murein tetrapeptide carboxypeptidase (304 aa).

S106 acts as the Nucleophile in catalysis. Residues E200 and H270 each act as charge relay system in the active site.

Belongs to the peptidase S66 family.

The protein localises to the cytoplasm. It catalyses the reaction N-acetyl-D-glucosaminyl-N-acetylmuramoyl-L-alanyl-meso-2,6-diaminoheptanedioyl-D-alanine + H2O = N-acetyl-D-glucosaminyl-N-acetylmuramoyl-L-alanyl-meso-2,6-diaminoheptanedioate + D-alanine. Its pathway is cell wall biogenesis; peptidoglycan recycling. Releases the terminal D-alanine residue from the cytoplasmic tetrapeptide recycling product L-Ala-gamma-D-Glu-meso-Dap-D-Ala. Can also cleave D-Ala from murein derivatives containing the tetrapeptide, i.e. MurNAc-tetrapeptide, UDP-MurNAc-tetrapeptide, GlcNAc-MurNAc-tetrapeptide, and GlcNAc-anhMurNAc-tetrapeptide. Does not act on murein sacculi or cross-linked muropeptides. The tripeptides produced by the LcdA reaction can then be reused as peptidoglycan building blocks; LcdA is thereby involved in murein recycling. This chain is Murein tetrapeptide carboxypeptidase (ldcA), found in Escherichia coli O157:H7.